The sequence spans 201 residues: Recombination protein RecR (201 aa).

The C4-type zinc-finger motif lies at 60–75; sequence CATCGNFDTVQPCAVC. Residues 83 to 178 form the Toprim domain; it reads GIICVVEDVP…DVTRLAHGVP (96 aa).

Belongs to the RecR family.

Functionally, may play a role in DNA repair. It seems to be involved in an RecBC-independent recombinational process of DNA repair. It may act with RecF and RecO. The chain is Recombination protein RecR from Hyphomonas neptunium (strain ATCC 15444).